Consider the following 279-residue polypeptide: NADPH-dependent 7-cyano-7-deazaguanine reductase (279 aa).

86–88 (IES) is a binding site for substrate. Residue 88-89 (SK) coordinates NADPH. The active-site Thioimide intermediate is cysteine 187. Aspartate 194 functions as the Proton donor in the catalytic mechanism. 226–227 (HE) contributes to the substrate binding site. An NADPH-binding site is contributed by 255 to 256 (RG).

Belongs to the GTP cyclohydrolase I family. QueF type 2 subfamily. In terms of assembly, homodimer.

It localises to the cytoplasm. It carries out the reaction 7-aminomethyl-7-carbaguanine + 2 NADP(+) = 7-cyano-7-deazaguanine + 2 NADPH + 3 H(+). It participates in tRNA modification; tRNA-queuosine biosynthesis. Catalyzes the NADPH-dependent reduction of 7-cyano-7-deazaguanine (preQ0) to 7-aminomethyl-7-deazaguanine (preQ1). In Haemophilus influenzae (strain PittGG), this protein is NADPH-dependent 7-cyano-7-deazaguanine reductase.